Reading from the N-terminus, the 580-residue chain is Putative multidrug export ATP-binding/permease protein YgaD (580 aa).

Over M1 to Q17 the chain is Cytoplasmic. A helical membrane pass occupies residues I18–L38. The region spanning F19–Q307 is the ABC transmembrane type-1 domain. Over L39–T57 the chain is Extracellular. Residues T58–V78 form a helical membrane-spanning segment. Topologically, residues E79–F135 are cytoplasmic. Residues V136–I156 traverse the membrane as a helical segment. Residues M157 to K163 lie on the Extracellular side of the membrane. The chain crosses the membrane as a helical span at residues L164 to G184. The Cytoplasmic portion of the chain corresponds to R185–N243. Residues W244 to V263 traverse the membrane as a helical segment. Residues I264–G268 are Extracellular-facing. Residues Y269–I288 form a helical membrane-spanning segment. Topologically, residues D289–N580 are cytoplasmic. Positions V341–I576 constitute an ABC transporter domain. G375–S382 serves as a coordination point for ATP.

It belongs to the ABC transporter superfamily. In terms of assembly, homodimer.

The protein resides in the cell membrane. May be involved in multidrug export. Transmembrane domains (TMD) form a pore in the cell membrane and the ATP-binding domain (NBD) is responsible for energy generation. The chain is Putative multidrug export ATP-binding/permease protein YgaD (ygaD) from Bacillus subtilis (strain 168).